A 215-amino-acid chain; its full sequence is MRVRNKPWAKGYMADHLDRLVVEPEPLKGNWQSRFPSNQPLFVEIGTGKGQFIIEMARQHPDRNFIGIEIQTSVIAVALKGVVNSGLTNIQLVHTDGEAINTFFEAGEVSGLYLNFSDPWPKKRHTKRRLTSPVFLAHYADVLQPEGQLQFKTDNRGLFEYSLGSLNNFGMVFEGVWLDLHAATDGVEDIQTEYEQKFSKKGPIYQVIAHFPTNN.

Residues Glu-44, Glu-69, Asp-96, and Asp-118 each contribute to the S-adenosyl-L-methionine site. Asp-118 is an active-site residue. Substrate contacts are provided by residues Lys-122, Asp-154, and 192–195 (TEYE).

The protein belongs to the class I-like SAM-binding methyltransferase superfamily. TrmB family.

It carries out the reaction guanosine(46) in tRNA + S-adenosyl-L-methionine = N(7)-methylguanosine(46) in tRNA + S-adenosyl-L-homocysteine. The protein operates within tRNA modification; N(7)-methylguanine-tRNA biosynthesis. Catalyzes the formation of N(7)-methylguanine at position 46 (m7G46) in tRNA. This Levilactobacillus brevis (strain ATCC 367 / BCRC 12310 / CIP 105137 / JCM 1170 / LMG 11437 / NCIMB 947 / NCTC 947) (Lactobacillus brevis) protein is tRNA (guanine-N(7)-)-methyltransferase.